The sequence spans 435 residues: MKTLTTYAKYFTPISKIAFLFCFLMGNIAEATIKRAKFTNGFSGINRIITYTFEGSSTMIASATTPEQILFSKARDNTVIDPSYSNNVQQWSVFNNWIDTTVSGDTGYSFAGFSCVSNPCAQMQLPLRFYLDSAILEATSMRSADNQVIFKIRQHPELGVSFQLGMKKGIEDVKWLSNLQQEDFLLTTLQIYFGDAADISFKVRAKLHLLKLPTENTELPTMKLNLGQIKLQSWGINNWGRTKVSYRVQDVGSLNVQLKTPKIYFIQQQRQCILNSTYKKIPVTLKSVKKREFETNTEIEGGQFKLRVNCEDTTYNKFNGKWLFPVVKVTFRGEDGTMNDGTNELLRTQTGTGQATGVSLKIKRDSGNGDSVKYGLDSANMNNHGQFELKKQPSPAGGDQSAEETFKVYYVKDTTRGALTEGKVKAAATFTMSYQ.

Positions M1–A31 are cleaved as a signal peptide.

The protein belongs to the fimbrial protein family.

The protein localises to the fimbrium. Functionally, may be a minor structural protein required for pilus biogenesis. May be the adhesive component in the pili. This chain is Minor fimbrial subunit HifE (hifE), found in Haemophilus influenzae.